A 174-amino-acid chain; its full sequence is MEECLKMIYTRRSIRVYSDRQISDEDIEKILKAAMLAPSAGNEQPWHFIVVRDREMLKKMSEAFTFGQMLPNASAAIVVCADPKLSKYPYDMWVQDCSAATENILLAARCLGIGSVWLGVYPREERMKALRELLGIPENIVVFSVVSLGYPKDEKDFYEADDRFNPDRIHREKW.

107-112 (AARCLG) serves as a coordination point for NAD(+).

Belongs to the nitroreductase family. FMN serves as cofactor.

This chain is Putative NADH dehydrogenase/NAD(P)H nitroreductase AF_2267, found in Archaeoglobus fulgidus (strain ATCC 49558 / DSM 4304 / JCM 9628 / NBRC 100126 / VC-16).